The following is a 414-amino-acid chain: Lysosome-associated membrane glycoprotein 1 (414 aa).

A signal peptide spans Met-1 to Ser-18. The first lumenal domain stretch occupies residues Phe-19 to Asp-181. Residues Phe-19 to Met-379 lie on the Lumenal side of the membrane. Cys-29 and Cys-67 are joined by a disulfide. 10 N-linked (GlcNAc...) asparagine glycosylation sites follow: Asn-33, Asn-58, Asn-71, Asn-90, Asn-108, Asn-117, Asn-154, Asn-159, Asn-168, and Asn-174. Residues Cys-142 and Cys-178 are joined by a disulfide bond. The interval Met-182–Ala-224 is hinge. The interval Thr-186–Ser-213 is disordered. Positions Ala-196–Ser-213 are enriched in low complexity. N-linked (GlcNAc...) asparagine glycosylation is found at Asn-220, Asn-225, Asn-238, Asn-259, Asn-289, Asn-301, and Asn-319. The interval Asn-225–Met-379 is second lumenal domain. Cys-228 and Cys-266 form a disulfide bridge. Cysteines 335 and 372 form a disulfide. Residues Leu-380–Gly-403 traverse the membrane as a helical segment. Topologically, residues Arg-404–Ile-414 are cytoplasmic.

The protein belongs to the LAMP family.

It localises to the lysosome membrane. Its subcellular location is the endosome membrane. The protein resides in the late endosome membrane. The protein localises to the cell membrane. It is found in the cytolytic granule membrane. Lysosomal membrane glycoprotein which plays an important role in lysosome biogenesis, lysosomal pH regulation, autophagy and cholesterol homeostasis. Functionally, (Microbial infection) Plays an essential role in efficient replication and spread of Marek's disease virus, by facilitating viral cell-to-cell spread. This chain is Lysosome-associated membrane glycoprotein 1 (LAMP1), found in Gallus gallus (Chicken).